A 205-amino-acid chain; its full sequence is Large ribosomal subunit protein uL3c (205 aa).

A disordered region spans residues 129–154; the sequence is SRGPMSHGSKNHRQPGSIGAGTTPGR.

Belongs to the universal ribosomal protein uL3 family. In terms of assembly, part of the 50S ribosomal subunit.

The protein resides in the plastid. It localises to the chloroplast. Functionally, one of the primary rRNA binding proteins, it binds directly near the 3'-end of the 23S rRNA, where it nucleates assembly of the 50S subunit. The sequence is that of Large ribosomal subunit protein uL3c (rpl3) from Pyropia yezoensis (Susabi-nori).